The chain runs to 277 residues: Myelin proteolipid protein (277 aa).

The Cytoplasmic segment spans residues 2–9 (GLLECCAR). Residues cysteine 6, cysteine 7, and cysteine 10 are each lipidated (S-palmitoyl cysteine). The chain crosses the membrane as a helical span at residues 10–36 (CLVGAPFASLVATGLCFFGVALFCGCG). The Extracellular portion of the chain corresponds to 37-63 (HEALTGTEKLIETYFSKNYQDYEYLIN). A helical transmembrane segment spans residues 64–88 (VIHAFQYVIYGTASFFFLYGALLLA). Residues 89–151 (EGFYTTGAVR…LGKWLGHPDK (63 aa)) lie on the Cytoplasmic side of the membrane. Cysteine 109 is lipidated: S-palmitoyl cysteine. Serine 114 carries the phosphoserine modification. 2 positions are modified to phosphothreonine: threonine 116 and threonine 118. 2 S-palmitoyl cysteine lipidation sites follow: cysteine 139 and cysteine 141. The chain crosses the membrane as a helical span at residues 152-177 (FVGITYALTVVWLLVFACSAVPVYIY). Residues 178-233 (FNTWTTCQSIAFPSKTSASIGSLCADARMYGVLPWNAFPGKVCGSNLLSICKTAEF) are Extracellular-facing. Cystine bridges form between cysteine 184-cysteine 228 and cysteine 201-cysteine 220. The O-palmitoyl serine moiety is linked to residue serine 199. Residues 234-260 (QMTFHLFIAAFVGAAATLVSLLTFMIA) form a helical membrane-spanning segment. Residues 261–277 (ATYNFAVLKLMGRGTKF) lie on the Cytoplasmic side of the membrane.

Belongs to the myelin proteolipid protein family. As to quaternary structure, interacts with MAL.

The protein localises to the cell membrane. The protein resides in the myelin membrane. Its function is as follows. This is the major myelin protein from the central nervous system. It plays an important role in the formation or maintenance of the multilamellar structure of myelin. The chain is Myelin proteolipid protein (Plp1) from Mus musculus (Mouse).